The following is a 138-amino-acid chain: Phosphoribosyl-AMP cyclohydrolase (138 aa).

A Mg(2+)-binding site is contributed by D92. C93 contributes to the Zn(2+) binding site. Mg(2+) is bound by residues D94 and D96. Positions 109 and 116 each coordinate Zn(2+).

It belongs to the PRA-CH family. As to quaternary structure, homodimer. It depends on Mg(2+) as a cofactor. Requires Zn(2+) as cofactor.

The protein resides in the cytoplasm. It catalyses the reaction 1-(5-phospho-beta-D-ribosyl)-5'-AMP + H2O = 1-(5-phospho-beta-D-ribosyl)-5-[(5-phospho-beta-D-ribosylamino)methylideneamino]imidazole-4-carboxamide. It functions in the pathway amino-acid biosynthesis; L-histidine biosynthesis; L-histidine from 5-phospho-alpha-D-ribose 1-diphosphate: step 3/9. Catalyzes the hydrolysis of the adenine ring of phosphoribosyl-AMP. This is Phosphoribosyl-AMP cyclohydrolase from Clavibacter sepedonicus (Clavibacter michiganensis subsp. sepedonicus).